The primary structure comprises 311 residues: Apolipoprotein E (311 aa).

The first 18 residues, 1-18, serve as a signal peptide directing secretion; the sequence is MKVWWAVLAAAILAGCRA. A run of 8 repeats spans residues 74–95, 96–116, 117–138, 139–160, 161–182, 183–204, 205–226, and 227–248. The tract at residues 74–248 is 8 X 22 AA approximate tandem repeats; it reads MLMEETMKEV…RLNEVREQVE (175 aa). M136 is subject to Methionine sulfoxide. S140 carries the post-translational modification Phosphoserine. Residues 151–161 form an LDL and other lipoprotein receptors binding region; it reads HLRKLRKRLLR. A heparin-binding site is contributed by 155-158; that stretch reads LRKR. The tract at residues 203-283 is lipid-binding and lipoprotein association; it reads VATVGTLAGR…SWFEPLVEDM (81 aa). A glycan (O-linked (GalNAc...) threonine) is linked at T205. 222 to 229 contributes to the heparin binding site; sequence GERLRGHL. The tract at residues 259–311 is homooligomerization; it reads PQMRLQAEAFQARLKSWFEPLVEDMQRQWAGLVEKLQAAMPSKAPAAAPIENQ. Positions 271–283 are specificity for association with VLDL; sequence RLKSWFEPLVEDM.

The protein belongs to the apolipoprotein A1/A4/E family. Homotetramer. May interact with ABCA1; functionally associated with ABCA1 in the biogenesis of HDLs. May interact with APP/A4 amyloid-beta peptide; the interaction is extremely stable in vitro but its physiological significance is unclear. May interact with MAPT. May interact with MAP2. In the cerebrospinal fluid, interacts with secreted SORL1. Interacts with PMEL; this allows the loading of PMEL luminal fragment on ILVs to induce fibril nucleation. APOE exists as multiple glycosylated and sialylated glycoforms within cells and in plasma. The extent of glycosylation and sialylation are tissue and context specific. In terms of processing, glycated in plasma VLDL. Post-translationally, phosphorylated by FAM20C in the extracellular medium.

The protein localises to the secreted. It localises to the extracellular space. Its subcellular location is the extracellular matrix. The protein resides in the extracellular vesicle. It is found in the endosome. The protein localises to the multivesicular body. In terms of biological role, APOE is an apolipoprotein, a protein associating with lipid particles, that mainly functions in lipoprotein-mediated lipid transport between organs via the plasma and interstitial fluids. APOE is a core component of plasma lipoproteins and is involved in their production, conversion and clearance. Apolipoproteins are amphipathic molecules that interact both with lipids of the lipoprotein particle core and the aqueous environment of the plasma. As such, APOE associates with chylomicrons, chylomicron remnants, very low density lipoproteins (VLDL) and intermediate density lipoproteins (IDL) but shows a preferential binding to high-density lipoproteins (HDL). It also binds a wide range of cellular receptors including the LDL receptor/LDLR and the very low-density lipoprotein receptor/VLDLR that mediate the cellular uptake of the APOE-containing lipoprotein particles. Finally, APOE also has a heparin-binding activity and binds heparan-sulfate proteoglycans on the surface of cells, a property that supports the capture and the receptor-mediated uptake of APOE-containing lipoproteins by cells. The protein is Apolipoprotein E (APOE) of Oryctolagus cuniculus (Rabbit).